The chain runs to 572 residues: Laccase-3 (572 aa).

Positions 1–18 (MARTTFLVSVSLFVSAVL) are cleaved as a signal peptide. 2 consecutive Plastocyanin-like domains span residues 21-145 (TVEY…LVIY) and 157-304 (IDDE…LIYE). The Cu cation site is built by His-82, His-84, His-127, and His-129. The cysteines at positions 103 and 561 are disulfide-linked. N-linked (GlcNAc...) asparagine glycosylation is found at Asn-182, Asn-228, Asn-294, Asn-367, and Asn-405. One can recognise a Plastocyanin-like 3 domain in the interval 422 to 540 (DMPTLLKILT…EGFAMVFAEA (119 aa)). Cu cation is bound by residues His-470, His-473, His-475, His-522, Cys-523, His-524, and His-528.

This sequence belongs to the multicopper oxidase family. Homodimer. Requires Cu cation as cofactor. In mycelia, at a lower level than LCC4.

Its subcellular location is the secreted. The enzyme catalyses 4 hydroquinone + O2 = 4 benzosemiquinone + 2 H2O. Lignin degradation and detoxification of lignin-derived products. This chain is Laccase-3 (LCC3), found in Thanatephorus cucumeris (Black scurf of potato).